Consider the following 310-residue polypeptide: p-hydroxybenzoic acid efflux pump subunit AaeA (310 aa).

A helical transmembrane segment spans residues 12 to 32 (AITVVLVILAFIAIFNAWVYY).

Belongs to the membrane fusion protein (MFP) (TC 8.A.1) family.

It is found in the cell inner membrane. In terms of biological role, forms an efflux pump with AaeB. In Shigella flexneri, this protein is p-hydroxybenzoic acid efflux pump subunit AaeA.